The primary structure comprises 141 residues: Metallothiol transferase FosB (141 aa).

The VOC domain occupies 5-120; that stretch reads SINHLLFSVS…DGHKFEFHTG (116 aa). 3 residues coordinate Mg(2+): His-8, His-67, and Glu-116. Glu-116 serves as the catalytic Proton donor/acceptor.

Belongs to the fosfomycin resistance protein family. FosB subfamily. Homodimer. The cofactor is Mg(2+).

The protein localises to the cytoplasm. In terms of biological role, metallothiol transferase which confers resistance to fosfomycin by catalyzing the addition of a thiol cofactor to fosfomycin. L-cysteine is probably the physiological thiol donor. The chain is Metallothiol transferase FosB from Lysinibacillus sphaericus (strain C3-41).